We begin with the raw amino-acid sequence, 214 residues long: Non-structural protein NP-1 (214 aa).

Disordered stretches follow at residues 1–87 (MSSE…TNPY) and 192–214 (ESEE…NASN). Over residues 33 to 43 (SRSRSPIRRHG) the composition is skewed to basic residues. Residues 44-55 (EKNLEYAHHSNQ) are compositionally biased toward basic and acidic residues. Residues 56–71 (ENRQSSYTALKTSDQA) show a composition bias toward polar residues. Positions 192 to 201 (ESEEVTDEEM) are enriched in acidic residues.

It belongs to the Bocaparvovirus Non-structural protein NP-1 family.

The protein resides in the host nucleus. Required for the expression of the capsid proteins. Performs the splicing and internal polyadenylation of the viral capsid-encoding mRNA precursor, which allows its maturation and expression. Transactivates the viral promoter. This is Non-structural protein NP-1 (NP1) from Human bocavirus 2 (HBoV2).